The chain runs to 259 residues: Ferritin-4, chloroplastic (259 aa).

The transit peptide at 1-57 (MLLKTVSSSSSSALSLVNFHGVKKDVSPLLPSISSNLRVSSGKSGNLTFSFRASKSS) directs the protein to the chloroplast. Residues 58 to 90 (TTDALSGVVFEPFKEVKKELDLVPTSSHLSLAR) form an extension peptide (EP) region. Positions 91 to 244 (QKYSDECEAA…EYVAQLRRVG (154 aa)) constitute a Ferritin-like diiron domain. Glu108, Glu143, His146, Glu192, and Gln226 together coordinate Fe cation.

Belongs to the ferritin family. In terms of assembly, oligomer of 24 subunits. There are two types of subunits: L (light) chain and H (heavy) chain. The major chain can be light or heavy, depending on the species and tissue type. The functional molecule forms a roughly spherical shell with a diameter of 12 nm and contains a central cavity into which the insoluble mineral iron core is deposited.

The protein resides in the plastid. The protein localises to the chloroplast. The enzyme catalyses 4 Fe(2+) + O2 + 4 H(+) = 4 Fe(3+) + 2 H2O. Its function is as follows. Stores iron in a soluble, non-toxic, readily available form. Important for iron homeostasis. Has ferroxidase activity. Iron is taken up in the ferrous form and deposited as ferric hydroxides after oxidation. The polypeptide is Ferritin-4, chloroplastic (FER4) (Arabidopsis thaliana (Mouse-ear cress)).